We begin with the raw amino-acid sequence, 225 residues long: AA9 family lytic polysaccharide monooxygenase A (225 aa).

The signal sequence occupies residues 1-17 (MLTTTFALLTAALGVSA). Cu(2+)-binding residues include H18 and H85. 2 disulfide bridges follow: C55/C173 and C143/C225. Positions 159 and 168 each coordinate O2. Y170 serves as a coordination point for Cu(2+).

It belongs to the polysaccharide monooxygenase AA9 family. Requires Cu(2+) as cofactor.

It is found in the secreted. It catalyses the reaction [(1-&gt;4)-beta-D-glucosyl]n+m + reduced acceptor + O2 = 4-dehydro-beta-D-glucosyl-[(1-&gt;4)-beta-D-glucosyl]n-1 + [(1-&gt;4)-beta-D-glucosyl]m + acceptor + H2O.. Its activity is regulated as follows. Is able to utilize various natural phenolic compounds as reducing agents. Most of these reducing agents are present in plants, either free or as lignin building blocks, such as sinapic acid, or as flavonoids such as catechin and dopamine. Phenolic compounds with 1,2-benzenediol and 1,2,3-benzenetriol moieties yield the highest release of oxidized and non-oxidized glucooligosaccharides from cellulose compared to monophenols or sulfur-containing compounds. In terms of biological role, lytic polysaccharide monooxygenase (LPMO) that depolymerizes crystalline and amorphous polysaccharides via the oxidation of scissile alpha- or beta-(1-4)-glycosidic bonds, yielding C1 or C4 oxidation products. Catalysis by LPMOs requires the reduction of the active-site copper from Cu(II) to Cu(I) by a reducing agent and H(2)O(2) or O(2) as a cosubstrate. Shows oxidative cleavage of xylan in addition to cellulose. Shows a strong synergistic effect with endoglucanase I (EGI) with a 16-fold higher release of detected oligosaccharides. This is AA9 family lytic polysaccharide monooxygenase A from Thermothelomyces thermophilus (strain ATCC 42464 / BCRC 31852 / DSM 1799) (Sporotrichum thermophile).